We begin with the raw amino-acid sequence, 371 residues long: Spermidine/putrescine import ATP-binding protein PotA (371 aa).

The ABC transporter domain occupies 10–240 (VELRNVTKSY…PKNLFVARFI (231 aa)). Position 42–49 (42–49 (GPSGCGKT)) interacts with ATP.

Belongs to the ABC transporter superfamily. Spermidine/putrescine importer (TC 3.A.1.11.1) family. The complex is composed of two ATP-binding proteins (PotA), two transmembrane proteins (PotB and PotC) and a solute-binding protein (PotD).

It localises to the cell inner membrane. It carries out the reaction ATP + H2O + polyamine-[polyamine-binding protein]Side 1 = ADP + phosphate + polyamineSide 2 + [polyamine-binding protein]Side 1.. Part of the ABC transporter complex PotABCD involved in spermidine/putrescine import. Responsible for energy coupling to the transport system. The chain is Spermidine/putrescine import ATP-binding protein PotA from Haemophilus ducreyi (strain 35000HP / ATCC 700724).